A 183-amino-acid polypeptide reads, in one-letter code: Adenine phosphoribosyltransferase (183 aa).

Belongs to the purine/pyrimidine phosphoribosyltransferase family. In terms of assembly, homodimer.

It is found in the cytoplasm. The catalysed reaction is AMP + diphosphate = 5-phospho-alpha-D-ribose 1-diphosphate + adenine. It functions in the pathway purine metabolism; AMP biosynthesis via salvage pathway; AMP from adenine: step 1/1. Functionally, catalyzes a salvage reaction resulting in the formation of AMP, that is energically less costly than de novo synthesis. The sequence is that of Adenine phosphoribosyltransferase from Blochmanniella floridana.